We begin with the raw amino-acid sequence, 196 residues long: Ribosome maturation factor RimP (196 aa).

A disordered region spans residues 163 to 196; that stretch reads GLAPSKPTGPAPKRPKPNTNSSSNEPAAKKPRAE.

This sequence belongs to the RimP family.

Its subcellular location is the cytoplasm. Required for maturation of 30S ribosomal subunits. The polypeptide is Ribosome maturation factor RimP (Stenotrophomonas maltophilia (strain K279a)).